The chain runs to 377 residues: tRNA-specific 2-thiouridylase MnmA (377 aa).

Residues 8-15 and methionine 34 each bind ATP; that span reads GMSGGVDS. Positions 94-96 are interaction with target base in tRNA; sequence NPD. Cysteine 99 serves as the catalytic Nucleophile. A disulfide bridge connects residues cysteine 99 and cysteine 201. Glycine 123 is an ATP binding site. The tract at residues 151–153 is interaction with tRNA; sequence KDQ. The active-site Cysteine persulfide intermediate is the cysteine 201. The interaction with tRNA stretch occupies residues 315 to 316; it reads RY.

It belongs to the MnmA/TRMU family.

It is found in the cytoplasm. It carries out the reaction S-sulfanyl-L-cysteinyl-[protein] + uridine(34) in tRNA + AH2 + ATP = 2-thiouridine(34) in tRNA + L-cysteinyl-[protein] + A + AMP + diphosphate + H(+). In terms of biological role, catalyzes the 2-thiolation of uridine at the wobble position (U34) of tRNA, leading to the formation of s(2)U34. In Acinetobacter baumannii (strain SDF), this protein is tRNA-specific 2-thiouridylase MnmA.